We begin with the raw amino-acid sequence, 259 residues long: Ribonuclease HII (259 aa).

Residues 70-258 enclose the RNase H type-2 domain; that stretch reads TLIAGIDEVG…VKSLVLGKKE (189 aa). A divalent metal cation-binding residues include aspartate 76, glutamate 77, and aspartate 168.

It belongs to the RNase HII family. Mn(2+) is required as a cofactor. The cofactor is Mg(2+).

Its subcellular location is the cytoplasm. It catalyses the reaction Endonucleolytic cleavage to 5'-phosphomonoester.. Endonuclease that specifically degrades the RNA of RNA-DNA hybrids. The protein is Ribonuclease HII of Streptococcus pneumoniae serotype 4 (strain ATCC BAA-334 / TIGR4).